The following is a 230-amino-acid chain: Small ribosomal subunit protein uS3 (230 aa).

Residues 39–107 (VRKFLVEKLQ…PAQINIAEIR (69 aa)) form the KH type-2 domain.

This sequence belongs to the universal ribosomal protein uS3 family. Part of the 30S ribosomal subunit. Forms a tight complex with proteins S10 and S14.

Its function is as follows. Binds the lower part of the 30S subunit head. Binds mRNA in the 70S ribosome, positioning it for translation. The sequence is that of Small ribosomal subunit protein uS3 from Shewanella baltica (strain OS223).